Here is a 214-residue protein sequence, read N- to C-terminus: ATP phosphoribosyltransferase (214 aa).

It belongs to the ATP phosphoribosyltransferase family. Short subfamily. As to quaternary structure, heteromultimer composed of HisG and HisZ subunits.

The protein localises to the cytoplasm. It catalyses the reaction 1-(5-phospho-beta-D-ribosyl)-ATP + diphosphate = 5-phospho-alpha-D-ribose 1-diphosphate + ATP. It functions in the pathway amino-acid biosynthesis; L-histidine biosynthesis; L-histidine from 5-phospho-alpha-D-ribose 1-diphosphate: step 1/9. Functionally, catalyzes the condensation of ATP and 5-phosphoribose 1-diphosphate to form N'-(5'-phosphoribosyl)-ATP (PR-ATP). Has a crucial role in the pathway because the rate of histidine biosynthesis seems to be controlled primarily by regulation of HisG enzymatic activity. The sequence is that of ATP phosphoribosyltransferase from Methylobacillus flagellatus (strain ATCC 51484 / DSM 6875 / VKM B-1610 / KT).